Consider the following 696-residue polypeptide: Lutropin-choriogonadotropic hormone receptor (696 aa).

Positions 1 to 27 (MRRRSLALRLLLALLLLPPPLPQTLLG) are cleaved as a signal peptide. The Extracellular portion of the chain corresponds to 28–358 (APCPEPCSCR…AFNPCEDIMG (331 aa)). N99 carries an N-linked (GlcNAc...) asparagine glycan. LRR repeat units follow at residues 122–147 (LPRL…IFSS), 149–171 (FNFI…AFQG), 172–196 (MNNE…AFNG), 198–220 (TLIS…AFRG), 221–244 (ARGP…GLES), and 250–271 (ATSS…LLDA). 2 N-linked (GlcNAc...) asparagine glycosylation sites follow: N174 and N195. N291, N299, and N313 each carry an N-linked (GlcNAc...) asparagine glycan. Residue Y331 is modified to Sulfotyrosine. Residues 359–386 (YDFLRVLIWLINILAIMGNVTVLFVLLT) form a helical membrane-spanning segment. The Cytoplasmic portion of the chain corresponds to 387–395 (SHYKLTVPR). The helical transmembrane segment at 396–418 (FLMCNLSFADFCMGLYLLLIASV) threads the bilayer. Residues 419 to 439 (DAQTKGQYYNHAIDWQTGNGC) are Extracellular-facing. C439 and C514 are oxidised to a cystine. Residues 440 to 462 (SVAGFFTVFASELSVYTLTVITL) form a helical membrane-spanning segment. The Cytoplasmic portion of the chain corresponds to 463–482 (ERWHTITYAIQLDQKLRLRH). A helical transmembrane segment spans residues 483–505 (AIPIMLGGWLFSTLIAMLPLVGV). Over 506–525 (SSYMKVSICLPMDVETTLSQ) the chain is Extracellular. The chain crosses the membrane as a helical span at residues 526 to 547 (VYILTILILNVVAFIIICACYI). The Cytoplasmic portion of the chain corresponds to 548-570 (KIYFAVQNPELMATNKDTKIAKK). Residues 571 to 594 (MAVLIFTDFTCMAPISFFAISAAL) traverse the membrane as a helical segment. At 595 to 605 (KVPLITVTNSK) the chain is on the extracellular side. The helical transmembrane segment at 606 to 626 (VLLVLFYPVNSCANPFLYAIF) threads the bilayer. Topologically, residues 627-696 (TKAFRRDFFL…VMDKTCYKDC (70 aa)) are cytoplasmic. 2 S-palmitoyl cysteine lipidation sites follow: C643 and C644.

The protein belongs to the G-protein coupled receptor 1 family. FSH/LSH/TSH subfamily. Sulfated.

The protein resides in the cell membrane. Functionally, receptor for lutropin-choriogonadotropic hormone. The activity of this receptor is mediated by G proteins which activate adenylate cyclase. In Sus scrofa (Pig), this protein is Lutropin-choriogonadotropic hormone receptor (LHCGR).